Reading from the N-terminus, the 149-residue chain is SsrA-binding protein (149 aa).

This sequence belongs to the SmpB family.

It localises to the cytoplasm. Required for rescue of stalled ribosomes mediated by trans-translation. Binds to transfer-messenger RNA (tmRNA), required for stable association of tmRNA with ribosomes. tmRNA and SmpB together mimic tRNA shape, replacing the anticodon stem-loop with SmpB. tmRNA is encoded by the ssrA gene; the 2 termini fold to resemble tRNA(Ala) and it encodes a 'tag peptide', a short internal open reading frame. During trans-translation Ala-aminoacylated tmRNA acts like a tRNA, entering the A-site of stalled ribosomes, displacing the stalled mRNA. The ribosome then switches to translate the ORF on the tmRNA; the nascent peptide is terminated with the 'tag peptide' encoded by the tmRNA and targeted for degradation. The ribosome is freed to recommence translation, which seems to be the essential function of trans-translation. The polypeptide is SsrA-binding protein (Wolbachia pipientis wMel).